Here is a 184-residue protein sequence, read N- to C-terminus: ATP synthase subunit b, chloroplastic (184 aa).

A helical membrane pass occupies residues 27-49 (LATNPINLSVVLGVLIFFGKGVL).

Belongs to the ATPase B chain family. F-type ATPases have 2 components, F(1) - the catalytic core - and F(0) - the membrane proton channel. F(1) has five subunits: alpha(3), beta(3), gamma(1), delta(1), epsilon(1). F(0) has four main subunits: a(1), b(1), b'(1) and c(10-14). The alpha and beta chains form an alternating ring which encloses part of the gamma chain. F(1) is attached to F(0) by a central stalk formed by the gamma and epsilon chains, while a peripheral stalk is formed by the delta, b and b' chains.

It is found in the plastid. It localises to the chloroplast thylakoid membrane. In terms of biological role, f(1)F(0) ATP synthase produces ATP from ADP in the presence of a proton or sodium gradient. F-type ATPases consist of two structural domains, F(1) containing the extramembraneous catalytic core and F(0) containing the membrane proton channel, linked together by a central stalk and a peripheral stalk. During catalysis, ATP synthesis in the catalytic domain of F(1) is coupled via a rotary mechanism of the central stalk subunits to proton translocation. Its function is as follows. Component of the F(0) channel, it forms part of the peripheral stalk, linking F(1) to F(0). This chain is ATP synthase subunit b, chloroplastic, found in Cuscuta exaltata (Tall dodder).